Here is a 326-residue protein sequence, read N- to C-terminus: ATP synthase subunit gamma, mitochondrial (326 aa).

A mitochondrion-targeting transit peptide spans 1–45 (MAMAALRREGRRLAAAPFTSPTPLNALRSSLVSPSEEIGLSGVRS).

The protein belongs to the ATPase gamma chain family. In terms of assembly, F-type ATPases have 2 components, CF(1) - the catalytic core - and CF(0) - the membrane proton channel. CF(1) has five subunits: alpha(3), beta(3), gamma(1), delta(1), epsilon(1). CF(0) has three main subunits: a, b and c.

The protein resides in the mitochondrion. It is found in the mitochondrion inner membrane. In terms of biological role, mitochondrial membrane ATP synthase (F(1)F(0) ATP synthase or Complex V) produces ATP from ADP in the presence of a proton gradient across the membrane which is generated by electron transport complexes of the respiratory chain. F-type ATPases consist of two structural domains, F(1) - containing the extramembraneous catalytic core, and F(0) - containing the membrane proton channel, linked together by a central stalk and a peripheral stalk. During catalysis, ATP synthesis in the catalytic domain of F(1) is coupled via a rotary mechanism of the central stalk subunits to proton translocation. Part of the complex F(1) domain and the central stalk which is part of the complex rotary element. The gamma subunit protrudes into the catalytic domain formed of alpha(3)beta(3). Rotation of the central stalk against the surrounding alpha(3)beta(3) subunits leads to hydrolysis of ATP in three separate catalytic sites on the beta subunits. The polypeptide is ATP synthase subunit gamma, mitochondrial (ATPC) (Ipomoea batatas (Sweet potato)).